We begin with the raw amino-acid sequence, 208 residues long: Coat protein (208 aa).

It belongs to the potexvirus capsid protein family.

The protein localises to the virion. In terms of biological role, required for genome encapsidation. Forms ribonucleoprotein complexes along with TGB1 helicase and viral RNA. The sequence is that of Coat protein from Trifolium (WCMV).